Reading from the N-terminus, the 195-residue chain is uncharacterized protein (195 aa).

A disordered region spans residues 143–195 (NKLIETINTNRTNNTDNKSTKSKKQTETKKSLRTNKIVKQPINKSKKNIREEY). Over residues 148–159 (TINTNRTNNTDN) the composition is skewed to low complexity.

This is an uncharacterized protein from Acanthamoeba polyphaga (Amoeba).